Consider the following 103-residue polypeptide: Interleukin-8 (103 aa).

The first 25 residues, 1–25 (MTSKLAVAFLAVFLLSAALCEAAVL), serve as a signal peptide directing secretion. R27 carries the citrulline modification. Disulfide bonds link C34–C61 and C36–C77.

This sequence belongs to the intercrine alpha (chemokine CxC) family. In terms of assembly, homodimer. Interacts with TNFAIP6 (via Link domain); this interaction interferes with chemokine binding to glycosaminoglycans. In terms of processing, citrullination at Arg-27 prevents proteolysis, and dampens tissue inflammation, it also enhances leukocytosis, possibly through impaired chemokine clearance from the blood circulation. As to expression, alveolar macrophages.

It localises to the secreted. Chemotactic factor that mediates inflammatory response by attracting neutrophils, basophils, and T-cells to clear pathogens and protect the host from infection. Also plays an important role in neutrophil activation. Released in response to an inflammatory stimulus, exerts its effect by binding to the G-protein-coupled receptors CXCR1 and CXCR2, primarily found in neutrophils, monocytes and endothelial cells. G-protein heterotrimer (alpha, beta, gamma subunits) constitutively binds to CXCR1/CXCR2 receptor and activation by IL8 leads to beta and gamma subunits release from Galpha (GNAI2 in neutrophils) and activation of several downstream signaling pathways including PI3K and MAPK pathways. The protein is Interleukin-8 (CXCL8) of Sus scrofa (Pig).